A 388-amino-acid chain; its full sequence is Flap endonuclease 1 (388 aa).

An N-domain region spans residues 1 to 105; that stretch reads MGIKNLTSLI…GELAKRYARR (105 aa). D34 contacts Mg(2+). DNA is bound at residue R71. Positions 87, 159, 161, 180, and 182 each coordinate Mg(2+). Positions 123 to 254 are I-domain; that stretch reads DVQKFQKRTI…KKSFDMITKH (132 aa). E159 serves as a coordination point for DNA. DNA is bound by residues G232 and D234. Mg(2+) is bound at residue D234. The interval 338 to 346 is interaction with PCNA; sequence VQTRIDTFF. A disordered region spans residues 349-388; it reads IKRPRDEDAGSAKKKQKTVAKPGAAGSKKKPAAKKAAGKK. The segment covering 375-388 has biased composition (basic residues); that stretch reads SKKKPAAKKAAGKK.

The protein belongs to the XPG/RAD2 endonuclease family. FEN1 subfamily. As to quaternary structure, interacts with PCNA. Three molecules of repG bind to one PCNA trimer with each molecule binding to one PCNA monomer. PCNA stimulates the nuclease activity without altering cleavage specificity. Mg(2+) is required as a cofactor. Post-translationally, phosphorylated. Phosphorylation upon DNA damage induces relocalization to the nuclear plasma.

The protein localises to the nucleus. It is found in the nucleolus. It localises to the nucleoplasm. The protein resides in the mitochondrion. Functionally, structure-specific nuclease with 5'-flap endonuclease and 5'-3' exonuclease activities involved in DNA replication and repair. During DNA replication, cleaves the 5'-overhanging flap structure that is generated by displacement synthesis when DNA polymerase encounters the 5'-end of a downstream Okazaki fragment. It enters the flap from the 5'-end and then tracks to cleave the flap base, leaving a nick for ligation. Also involved in the long patch base excision repair (LP-BER) pathway, by cleaving within the apurinic/apyrimidinic (AP) site-terminated flap. Acts as a genome stabilization factor that prevents flaps from equilibrating into structures that lead to duplications and deletions. Also possesses 5'-3' exonuclease activity on nicked or gapped double-stranded DNA, and exhibits RNase H activity. Also involved in replication and repair of rDNA and in repairing mitochondrial DNA. The chain is Flap endonuclease 1 from Heterostelium pallidum (strain ATCC 26659 / Pp 5 / PN500) (Cellular slime mold).